The chain runs to 84 residues: Cell division topological specificity factor (84 aa).

The protein belongs to the MinE family.

Its function is as follows. Prevents the cell division inhibition by proteins MinC and MinD at internal division sites while permitting inhibition at polar sites. This ensures cell division at the proper site by restricting the formation of a division septum at the midpoint of the long axis of the cell. The protein is Cell division topological specificity factor of Pseudomonas aeruginosa (strain LESB58).